Reading from the N-terminus, the 361-residue chain is G-protein coupled receptor 52 (361 aa).

Residues 1–44 (MNDSRWTEWRILNTSSGILNVSERHSCPLGFGHYSAVDVCIFET) lie on the Extracellular side of the membrane. N-linked (GlcNAc...) asparagine glycans are attached at residues asparagine 2, asparagine 13, and asparagine 20. The helical transmembrane segment at 45–65 (IVIVLLTFLIIAGNLTVIFVF) threads the bilayer. Residues 66–87 (HCAPLLHHYTTSYFIQTMAYAD) are Cytoplasmic-facing. A helical transmembrane segment spans residues 88–108 (LFVGVSCLVPTLSLLHYSTGI). The Extracellular segment spans residues 109 to 115 (HESLTCQ). Cysteine 114 and cysteine 193 are oxidised to a cystine. The chain crosses the membrane as a helical span at residues 116-136 (VFGYIISVLKSVSMACLACIS). Residues 137–159 (VDRYLAITKPLSYNQLVTPCRLR) are Cytoplasmic-facing. A helical membrane pass occupies residues 160–180 (ICIILIWIYSCLIFLPSFFGW). Residues 181–200 (GKPGYHGDIFEWCATSWLTS) are Extracellular-facing. Residues 201–221 (AYFTGFIVCLLYAPAALVVCF) form a helical membrane-spanning segment. At 222 to 265 (TYFHIFKICRQHTKEINDRRARFPSHEAAASRDAGHSPDRRYAM) the chain is on the cytoplasmic side. A helical membrane pass occupies residues 266-286 (VLFRITSVFYMLWLPYIIYFL). The Extracellular portion of the chain corresponds to 287 to 296 (LESSRVLDNP). A helical transmembrane segment spans residues 297 to 317 (TLSFLTTWLAISNSFCNCVIY). The Cytoplasmic portion of the chain corresponds to 318 to 361 (SLSNSVFRLGLRRLSETMCTSCMCVKDKEARDPKPRKRANSCSI).

It belongs to the G-protein coupled receptor 1 family.

The protein resides in the cell membrane. Its function is as follows. G- protein coupled receptor activated by antipsychotics reserpine leading to an increase in intracellular cAMP and its internalization. May play a role in locomotor activity through modulation of dopamine, NMDA and ADORA2A-induced locomotor activity. These behavioral changes are accompanied by modulation of the dopamine receptor signaling pathway in striatum. Modulates HTT level via cAMP-dependent but PKA independent mechanisms throught activation of RAB39B that translocates HTT to the endoplasmic reticulum, thus avoiding proteasome degradation. In Bos taurus (Bovine), this protein is G-protein coupled receptor 52.